We begin with the raw amino-acid sequence, 527 residues long: Probable T-complex protein 1 subunit beta (527 aa).

It belongs to the TCP-1 chaperonin family. Heterooligomeric complex of about 850 to 900 kDa that forms two stacked rings, 12 to 16 nm in diameter.

It localises to the cytoplasm. Functionally, molecular chaperone; assists the folding of proteins upon ATP hydrolysis. Known to play a role, in vitro, in the folding of actin and tubulin. This is Probable T-complex protein 1 subunit beta (cct2) from Schizosaccharomyces pombe (strain 972 / ATCC 24843) (Fission yeast).